The following is a 372-amino-acid chain: Tyrosine--tRNA ligase (372 aa).

L-tyrosine-binding residues include Y37, Y169, Q173, D176, and Q191. The 'KMSKS' region motif lies at 246–250 (KMSKS). Residue K249 coordinates ATP.

The protein belongs to the class-I aminoacyl-tRNA synthetase family. TyrS type 4 subfamily. In terms of assembly, homodimer.

It localises to the cytoplasm. The enzyme catalyses tRNA(Tyr) + L-tyrosine + ATP = L-tyrosyl-tRNA(Tyr) + AMP + diphosphate + H(+). Its function is as follows. Catalyzes the attachment of tyrosine to tRNA(Tyr) in a two-step reaction: tyrosine is first activated by ATP to form Tyr-AMP and then transferred to the acceptor end of tRNA(Tyr). In Pyrobaculum calidifontis (strain DSM 21063 / JCM 11548 / VA1), this protein is Tyrosine--tRNA ligase.